We begin with the raw amino-acid sequence, 192 residues long: Ion-translocating oxidoreductase complex subunit A (192 aa).

The next 6 helical transmembrane spans lie at 5 to 25 (ILLI…FLGL), 39 to 59 (IGMS…AYLI), 63 to 83 (ILTP…VIAV), 102 to 122 (LLGI…VALL), 134 to 154 (VIYG…FAAL), and 171 to 191 (SIAL…TGLV).

This sequence belongs to the NqrDE/RnfAE family. In terms of assembly, the complex is composed of six subunits: RnfA, RnfB, RnfC, RnfD, RnfE and RnfG.

It localises to the cell inner membrane. Part of a membrane-bound complex that couples electron transfer with translocation of ions across the membrane. The sequence is that of Ion-translocating oxidoreductase complex subunit A from Pasteurella multocida (strain Pm70).